A 100-amino-acid polypeptide reads, in one-letter code: NADH-quinone oxidoreductase subunit K (100 aa).

A run of 3 helical transmembrane segments spans residues 1–21 (MIGLNHYLIVSGLLFCIGLAG), 28–48 (ILLLFFSTEIMLNAINIGFVA), and 64–84 (FIIAIAASEVAIGLGLVILWF).

The protein belongs to the complex I subunit 4L family. As to quaternary structure, NDH-1 is composed of 14 different subunits. Subunits NuoA, H, J, K, L, M, N constitute the membrane sector of the complex.

Its subcellular location is the cell inner membrane. It catalyses the reaction a quinone + NADH + 5 H(+)(in) = a quinol + NAD(+) + 4 H(+)(out). Its function is as follows. NDH-1 shuttles electrons from NADH, via FMN and iron-sulfur (Fe-S) centers, to quinones in the respiratory chain. The immediate electron acceptor for the enzyme in this species is believed to be ubiquinone. Couples the redox reaction to proton translocation (for every two electrons transferred, four hydrogen ions are translocated across the cytoplasmic membrane), and thus conserves the redox energy in a proton gradient. The protein is NADH-quinone oxidoreductase subunit K of Helicobacter pylori (strain Shi470).